Here is an 82-residue protein sequence, read N- to C-terminus: MAFTLYSLLQAALLCVNAIAVLHEERFLKNIGWGTDQGIGGFGEEPGIKSQLMNLIRSVRTVMRVPLIIVNSIAIVLLLLFG.

2 helical membrane-spanning segments follow: residues 2–22 (AFTL…IAVL) and 62–82 (VMRV…LLFG).

It belongs to the YOS1 family.

Its subcellular location is the endoplasmic reticulum membrane. Its function is as follows. Regulator of endoplasmic reticulum secretion that acts as a key determinant of brain size. Required for secretion of extracellular matrix proteins. Required for correct brain development by depositing sufficient extracellular matrix proteins for tissue integrity and the proliferation of neural progenitors. Acts as a regulator of the unfolded protein response (UPR). This chain is Immediate early response 3-interacting protein 1, found in Bos taurus (Bovine).